The primary structure comprises 586 residues: MLIRLKKRKILQVIVSAVVLILFFCSVHNDVSSSWLYGKKLRLPVLTRSNLKNNFYTTLVQAIVENKPTDSSPDLSKLHGAEGCSFANNVAAHDSGHDSDLSYESLSKCYNLNKTVQESLREVHSKFTDTLSGKLNFSIPQREALFSGSEGIVTIGGGKYSVLAYTMIKKLRDTGTTLPIEVIIPPQDEGEDDFCKNWLPKFNGKCIYFSDIVPSKPLSDLKLTHFQLKVFGLIISSFKRIIFLDADNYAVKNLDLAFNTTSFNDTGLILWPDFWRRVTPPAFYNIIGSSIDIGKRVRFVSDDISPVSRYDPFVSNSNDYTPKERQEHFLKHVPLHDLDGTMPDLSSESGQMVIDKIRHFNTLLLALYYNVYGPTWYYKMISQGTAGEGDKDTFVAAAHALNMPYYQVRTKFEFDGFFYQKDDYKGLALLQHDFEQDYKQYQKAQQEVKANIEEFSKLDPDYTLDNGFLKTLMVNDDGSDLDIMFIHASFYKADPWTLYHENRFIGPNGEQVRGFRKPHRYGMDFELFLFNDMSKSFCTTPKSQVIKFKYFTDKVNTPEWDAMCEYLTNHVNYLESTHKEAMGEKN.

The N-terminal stretch at 1-29 (MLIRLKKRKILQVIVSAVVLILFFCSVHN) is a signal peptide. 4 N-linked (GlcNAc...) asparagine glycosylation sites follow: asparagine 113, asparagine 136, asparagine 259, and asparagine 264.

It belongs to the MNN1/MNT family. Glycosylated.

The protein resides in the golgi apparatus. It is found in the cis-Golgi network. It functions in the pathway protein modification; protein glycosylation. In terms of biological role, responsible for addition of first and second mannose residues to the outer chain of core N-linked polysaccharides and to O-linked mannotriose. Implicated in late Golgi modifications. The polypeptide is Alpha-1,2-mannosyltransferase MNN5 (MNN5) (Saccharomyces cerevisiae (strain YJM789) (Baker's yeast)).